The following is an 89-amino-acid chain: Small ribosomal subunit protein bS20 (89 aa).

Residues 1-20 (MANHKSAEKRARQTIKRTER) form a disordered region.

The protein belongs to the bacterial ribosomal protein bS20 family.

Its function is as follows. Binds directly to 16S ribosomal RNA. This chain is Small ribosomal subunit protein bS20, found in Campylobacter curvus (strain 525.92).